Consider the following 439-residue polypeptide: Histidine--tRNA ligase (439 aa).

The protein belongs to the class-II aminoacyl-tRNA synthetase family. Homodimer.

It localises to the cytoplasm. The catalysed reaction is tRNA(His) + L-histidine + ATP = L-histidyl-tRNA(His) + AMP + diphosphate + H(+). The polypeptide is Histidine--tRNA ligase (Leptospira interrogans serogroup Icterohaemorrhagiae serovar copenhageni (strain Fiocruz L1-130)).